Consider the following 359-residue polypeptide: Type-1 angiotensin II receptor (359 aa).

Residues 1-25 are Extracellular-facing; sequence MILNSSTEDGIKRIQDDCPKAGRHN. N-linked (GlcNAc...) asparagine glycosylation occurs at N4. Residues Q15 and D17 each coordinate angiotensin II. 2 disulfide bridges follow: C18-C274 and C101-C180. The helical transmembrane segment at 26–55 threads the bilayer; the sequence is YIFVMIPTLYSIIFVVGIFGNSLVVIVIYF. Residues 56–61 are Cytoplasmic-facing; that stretch reads YMKLKT. Residues 62–89 form a helical membrane-spanning segment; that stretch reads VASVFLLNLALADLCFLLTLPLWAVYTA. Residues 90-98 lie on the Extracellular side of the membrane; it reads MEYRWPFGN. Residues 99–125 traverse the membrane as a helical segment; the sequence is YLCKIASASVSFNLYASVFLLTCLSID. Topologically, residues 126–141 are cytoplasmic; it reads RYVAIVHPMKSPVRRT. A helical transmembrane segment spans residues 142–165; it reads MLMAKVTCIIIWLLAGLASLPTII. At 166 to 190 the chain is on the extracellular side; that stretch reads HRNVFFIENTNITVCAFHYESQNST. R167 is an angiotensin II binding site. N176 carries an N-linked (GlcNAc...) asparagine glycan. Angiotensin II-binding residues include F182, H183, and Y184. N-linked (GlcNAc...) asparagine glycosylation occurs at N188. A helical transmembrane segment spans residues 191–216; it reads LPIGLGLTKNILGFLFPFLIILTSYT. Angiotensin II is bound at residue K199. At 217–239 the chain is on the cytoplasmic side; that stretch reads LIWKTLKRAYEIQKNKPRNDDIF. Residues 240 to 268 traverse the membrane as a helical segment; the sequence is KIIMAIVLFFFFSWVPHQIFTFLDVLIQL. Topologically, residues 269–278 are extracellular; the sequence is GIIHDCKIAD. A helical membrane pass occupies residues 279-304; the sequence is IVDTAMPITICIAYFNNCLNPLFYGF. Residues 305-359 lie on the Cytoplasmic side of the membrane; it reads LGKKFKKYFLQLLKYIPPKAKSHSSLSTKMSTLSYRPSDHGNASTKKSASCVEVE. Over residues 335–352 the composition is skewed to polar residues; it reads STLSYRPSDHGNASTKKS. Residues 335 to 359 are disordered; sequence STLSYRPSDHGNASTKKSASCVEVE. C355 is lipidated: S-palmitoyl cysteine.

It belongs to the G-protein coupled receptor 1 family. Interacts with MAS1. Interacts with ARRB1. Interacts with FLNA (via filamin repeat 21); increases PKA-mediated phosphorylation of FLNA. Post-translationally, C-terminal Ser or Thr residues may be phosphorylated. Adrenal, liver, aorta, kidney, lung, testis and heart.

It localises to the cell membrane. Its function is as follows. Receptor for angiotensin II, a vasoconstricting peptide, which acts as a key regulator of blood pressure and sodium retention by the kidney. The activated receptor in turn couples to G-alpha proteins G(q) (GNAQ, GNA11, GNA14 or GNA15) and thus activates phospholipase C and increases the cytosolic Ca(2+) concentrations, which in turn triggers cellular responses such as stimulation of protein kinase C. The protein is Type-1 angiotensin II receptor (AGTR1) of Canis lupus familiaris (Dog).